The primary structure comprises 256 residues: Thrombin-like enzyme cerastocytin (256 aa).

The N-terminal stretch at 1-18 (MVLISVLASLLVLQLSYA) is a signal peptide. The propeptide occupies 19–24 (QKSSEL). A Peptidase S1 domain is found at 25–247 (VIGGAECNIN…YTDWIRNIIA (223 aa)). 5 cysteine pairs are disulfide-bonded: C31/C161, C98/C254, C140/C208, C172/C187, and C198/C223. The N-linked (GlcNAc...) asparagine glycan is linked to N44. Catalysis depends on charge relay system residues H65 and D108. 3 N-linked (GlcNAc...) asparagine glycosylation sites follow: N119, N120, and N152. S202 functions as the Charge relay system in the catalytic mechanism.

The protein belongs to the peptidase S1 family. Snake venom subfamily. As to quaternary structure, monomer. In terms of tissue distribution, expressed by the venom gland.

It is found in the secreted. With respect to regulation, its platelets aggregating activity is inhibited by chlorpromazine, theophylline mepacrine. Its platelet aggregating activity and its amidolytic activity are inhibited by PMSF, TPCK, TLCK and soybean trypsin inhibitors. Is unaffected by hirudin or by antithrombin-III in the presence of heparin. Its function is as follows. Thrombin-like snake venom serine protease which potently induces platelet aggregation and has fibrinogenolytic activities. Clots purified fibrinogen and hydrolyzes alpha-chains (FGA). High concentrations of this enzyme also cleave prothrombin (F2) and factor X (F10). Is also able to activate factor XIII (F8). The sequence is that of Thrombin-like enzyme cerastocytin from Cerastes cerastes (Horned desert viper).